Reading from the N-terminus, the 715-residue chain is Fatty acid oxidation complex subunit alpha (715 aa).

An enoyl-CoA hydratase region spans residues 1–190 (MTTTSAFMLN…RAGLVDDVVP (190 aa)). The segment at 306-715 (GPLNSVGILG…WTNGETDQGN (410 aa)) is 3-hydroxyacyl-CoA dehydrogenase.

This sequence in the N-terminal section; belongs to the enoyl-CoA hydratase/isomerase family. In the central section; belongs to the 3-hydroxyacyl-CoA dehydrogenase family. Heterotetramer of two alpha chains (FadJ) and two beta chains (FadI).

It is found in the cytoplasm. It carries out the reaction a (3S)-3-hydroxyacyl-CoA = a (2E)-enoyl-CoA + H2O. The catalysed reaction is a 4-saturated-(3S)-3-hydroxyacyl-CoA = a (3E)-enoyl-CoA + H2O. It catalyses the reaction a (3S)-3-hydroxyacyl-CoA + NAD(+) = a 3-oxoacyl-CoA + NADH + H(+). The enzyme catalyses (3S)-3-hydroxybutanoyl-CoA = (3R)-3-hydroxybutanoyl-CoA. It functions in the pathway lipid metabolism; fatty acid beta-oxidation. In terms of biological role, catalyzes the formation of a hydroxyacyl-CoA by addition of water on enoyl-CoA. Also exhibits 3-hydroxyacyl-CoA epimerase and 3-hydroxyacyl-CoA dehydrogenase activities. The chain is Fatty acid oxidation complex subunit alpha from Salmonella schwarzengrund (strain CVM19633).